A 47-amino-acid chain; its full sequence is GNCKCDDEGPNVRTAPLTGYVDLGYCNEGWEKCASYYSPIAECCRKK.

Cystine bridges form between cysteine 3-cysteine 43, cysteine 5-cysteine 33, and cysteine 26-cysteine 44.

Belongs to the sea anemone sodium channel inhibitory toxin family. Type II subfamily.

Its subcellular location is the secreted. The protein localises to the nematocyst. Its function is as follows. Binds to site 3 of voltage-gated sodium channels and inhibits the inactivation process. This Radianthus crispa (Leathery sea anemone) protein is Delta-stichotoxin-Hcr1d.